We begin with the raw amino-acid sequence, 162 residues long: MADSSFDIVSKVERQEVDNALNQAAKEISQRYDFKGVGASISWSGEKILMEANSEDRVTAVLDVFQSKLIKRGISLKALDAGEPQLSGKEYKIFASIEEGISQENAKKVAKLIRDEGPKGVKAQVQGEELRVSSKSRDDLQTVISLLKGQDFDFALQFVNYR.

It belongs to the YajQ family.

It localises to the cytoplasm. The protein localises to the nucleoid. Its function is as follows. Nucleotide-binding protein. The sequence is that of Nucleotide-binding protein SCO4614 from Streptomyces coelicolor (strain ATCC BAA-471 / A3(2) / M145).